A 98-amino-acid polypeptide reads, in one-letter code: UPF0473 protein LSL_1108 (98 aa).

It belongs to the UPF0473 family.

In Ligilactobacillus salivarius (strain UCC118) (Lactobacillus salivarius), this protein is UPF0473 protein LSL_1108.